We begin with the raw amino-acid sequence, 127 residues long: uncharacterized protein (127 aa).

Residues 91 to 113 form a helical membrane-spanning segment; the sequence is IYLIVSIAVSILAIIAFFIFLML.

It localises to the membrane. This is an uncharacterized protein from Bacillus subtilis (strain 168).